The following is a 602-amino-acid chain: MDHFARVSLVAALLYTNTWAKTVRETLRITWEEGAPNGQQRELIYINGRFPGPNLVWDEDDDVEVTVINDMTQSVTVHWHGLDQRPIQPGDSFVHKFKAFPPGNHWYHSHQKMSLVDGLYGAVHVRPKGDRKGLWSQISQDDKDIEAMEKAACDPEYLVVSDWSQYTSDEYWKISNDSGLPVFCLDSILVNGKGEVYCPGQKFLQGELAPGVLDAFPPGTEVSDKGCFSPALDRIKGGPWNMTERPDLIPPHVETGCVASRHENETIVVDPGRNNGWVSMHIVAAATIAQIAISFDSHKFWLYEVDGNYVNPREYFSAIISAGETFSIMMKLDQEPGRYTVRIPNTGASQVFSAFAEMVYKGHEENDKKLGEARLSYGGVPTSPEIKNNSYFPWKLDTDHMSPWPPSTPRPGNADEEHLLVLGRVGSPNNHTMNAKYLYPLGFRDEEPLLFYPNATLGTENEGLLLRTRNASWVDLIMQVSTLAGDEVAFKHFIHKHGGKTWRIGFGTGVWNYSSVQEAIQARPNDFNLETPGFRDTWITAPSASGEKHWSVLRYYVDNPGPWLLHCHIELHLMGGMGMVIMDGVDAWPDQLPEQYRLGKRL.

The first 20 residues, 1–20 (MDHFARVSLVAALLYTNTWA), serve as a signal peptide directing secretion. 2 consecutive Plastocyanin-like domains span residues 30 to 128 (TWEE…VRPK) and 157 to 345 (YLVV…RIPN). Cu cation-binding residues include H78, H80, H108, and H110. 7 N-linked (GlcNAc...) asparagine glycosylation sites follow: N176, N241, N264, N388, N430, N454, and N470. The Plastocyanin-like 3 domain maps to 461 to 584 (NEGLLLRTRN…GGMGMVIMDG (124 aa)). H492, H495, and H497 together coordinate Cu cation. Residue N512 is glycosylated (N-linked (GlcNAc...) asparagine). H566, C567, H568, and H572 together coordinate Cu cation.

It belongs to the multicopper oxidase family. Cu cation serves as cofactor.

Its subcellular location is the cell surface. The protein operates within pigment biosynthesis. Functionally, laccase; part of the Pks1 gene cluster that mediates the biosynthesis of an anthraquinone derivative pigment that contributes to conidial pigmentation that provides protection from UV radiation, heat and cold stress. The polyketide synthase Pks1 produces 1-acetyl-2,4,6,8-tetrahydroxy-9,10-anthraquinone though condensation of acetyl-CoA with malonyl-CoA. The dehydratase EthD and the laccase Mlac1 further convert the anthraquinone derivative into the final conidial pigment. In Metarhizium album (strain ARSEF 1941), this protein is Laccase 1.